Consider the following 558-residue polypeptide: Formate--tetrahydrofolate ligase (558 aa).

Residue 66-73 participates in ATP binding; that stretch reads TPAGEGKT.

This sequence belongs to the formate--tetrahydrofolate ligase family.

The enzyme catalyses (6S)-5,6,7,8-tetrahydrofolate + formate + ATP = (6R)-10-formyltetrahydrofolate + ADP + phosphate. It participates in one-carbon metabolism; tetrahydrofolate interconversion. The polypeptide is Formate--tetrahydrofolate ligase (Neisseria gonorrhoeae (strain NCCP11945)).